Here is a 268-residue protein sequence, read N- to C-terminus: Type III pantothenate kinase 1 (268 aa).

6-13 (DIGNTNIT) lines the ATP pocket. Substrate-binding positions include Tyr-100 and 107 to 110 (GTDR). Catalysis depends on Asp-109, which acts as the Proton acceptor. Asp-133 contacts K(+). Residue Thr-136 participates in ATP binding.

Belongs to the type III pantothenate kinase family. Homodimer. Requires NH4(+) as cofactor. K(+) is required as a cofactor.

The protein localises to the cytoplasm. It catalyses the reaction (R)-pantothenate + ATP = (R)-4'-phosphopantothenate + ADP + H(+). It functions in the pathway cofactor biosynthesis; coenzyme A biosynthesis; CoA from (R)-pantothenate: step 1/5. In terms of biological role, catalyzes the phosphorylation of pantothenate (Pan), the first step in CoA biosynthesis. This is Type III pantothenate kinase 1 from Symbiobacterium thermophilum (strain DSM 24528 / JCM 14929 / IAM 14863 / T).